The primary structure comprises 228 residues: Max-interacting protein 1 (228 aa).

Disordered stretches follow at residues 30–76 (YASS…NELE) and 160–228 (SIGS…SFAS). Basic residues predominate over residues 43–56 (QHSKPPRRLSRAQK). Polar residues predominate over residues 57-70 (HSSGSSNTSTANRS). The 53-residue stretch at 67–119 (ANRSTHNELEKNRRAHLRLCLERLKVLIPLGPDCTRHTTLGLLNKAKAHIKKL) folds into the bHLH domain. The segment covering 173–183 (EREEIEVDVES) has biased composition (acidic residues). Polar residues predominate over residues 207–228 (SLQSVGSDEGYSSASVKLSFAS).

In terms of assembly, efficient DNA binding requires dimerization with another bHLH protein. Binds DNA as a heterodimer with MAX. Interacts with SMC3. Interacts with RNF17.

Its subcellular location is the nucleus. Functionally, transcriptional repressor. MXI1 binds with MAX to form a sequence-specific DNA-binding protein complex which recognizes the core sequence 5'-CAC[GA]TG-3'. MXI1 thus antagonizes MYC transcriptional activity by competing for MAX. Isoform Short, which lacks a segment, has a much stronger suppressive potential and associates with a SIN3 homologous protein. This chain is Max-interacting protein 1 (Mxi1), found in Mus musculus (Mouse).